A 328-amino-acid polypeptide reads, in one-letter code: Biotin synthase (328 aa).

The region spanning 48–275 is the Radical SAM core domain; sequence NRIQLSKLLN…KSHVRLTAGR (228 aa). 3 residues coordinate [4Fe-4S] cluster: cysteine 63, cysteine 67, and cysteine 70. 4 residues coordinate [2Fe-2S] cluster: cysteine 107, cysteine 138, cysteine 198, and arginine 270.

This sequence belongs to the radical SAM superfamily. Biotin synthase family. Homodimer. Requires [4Fe-4S] cluster as cofactor. [2Fe-2S] cluster serves as cofactor.

The enzyme catalyses (4R,5S)-dethiobiotin + (sulfur carrier)-SH + 2 reduced [2Fe-2S]-[ferredoxin] + 2 S-adenosyl-L-methionine = (sulfur carrier)-H + biotin + 2 5'-deoxyadenosine + 2 L-methionine + 2 oxidized [2Fe-2S]-[ferredoxin]. It participates in cofactor biosynthesis; biotin biosynthesis; biotin from 7,8-diaminononanoate: step 2/2. Functionally, catalyzes the conversion of dethiobiotin (DTB) to biotin by the insertion of a sulfur atom into dethiobiotin via a radical-based mechanism. This is Biotin synthase from Brucella ovis (strain ATCC 25840 / 63/290 / NCTC 10512).